Reading from the N-terminus, the 154-residue chain is Endoribonuclease YbeY (154 aa).

3 residues coordinate Zn(2+): His-113, His-117, and His-123.

It belongs to the endoribonuclease YbeY family. It depends on Zn(2+) as a cofactor.

The protein resides in the cytoplasm. In terms of biological role, single strand-specific metallo-endoribonuclease involved in late-stage 70S ribosome quality control and in maturation of the 3' terminus of the 16S rRNA. The chain is Endoribonuclease YbeY from Aeromonas hydrophila subsp. hydrophila (strain ATCC 7966 / DSM 30187 / BCRC 13018 / CCUG 14551 / JCM 1027 / KCTC 2358 / NCIMB 9240 / NCTC 8049).